The following is a 120-amino-acid chain: UPF0344 protein BCAH187_A1308 (120 aa).

A run of 4 helical transmembrane segments spans residues 6-26, 32-52, 64-84, and 91-111; these read ITAWALGLILFFVAYSLYSAG, VHMGLRLMYIIIIVTGVWLYL, WYGLKMLAGILVIAGMEMVLV, and ATGAFWGLFIIALVAVFYLGL.

It belongs to the UPF0344 family.

Its subcellular location is the cell membrane. The polypeptide is UPF0344 protein BCAH187_A1308 (Bacillus cereus (strain AH187)).